A 281-amino-acid polypeptide reads, in one-letter code: 3-mercaptopyruvate sulfurtransferase (281 aa).

Rhodanese domains lie at 17-135 and 165-278; these read DDPE…LLEE and HENT…LPVE. R179 serves as a coordination point for substrate. C238 functions as the Cysteine persulfide intermediate in the catalytic mechanism. Residues 238–244 are substrate specificity; the sequence is CGSGVTA.

It localises to the cytoplasm. It carries out the reaction 2-oxo-3-sulfanylpropanoate + [thioredoxin]-dithiol = [thioredoxin]-disulfide + hydrogen sulfide + pyruvate + H(+). Its function is as follows. Catalyzes the transfer of sulfur from 3-mercaptopyruvate to a thiol-containing acceptor to form an intramolecular disulfide releasing hydrogen sulfide and pyruvate. In Escherichia coli O157:H7, this protein is 3-mercaptopyruvate sulfurtransferase (sseA).